A 68-amino-acid polypeptide reads, in one-letter code: conotoxin S11.3 (68 aa).

Residues 1–26 (MMFRLTSVSCFLLVIVCLNLFQVVLT) form the signal peptide. 4 disulfides stabilise this stretch: C29-C43, C36-C48, C42-C52, and C47-C56. Y60 is subject to Tyrosine amide. Residues 64-68 (ATFQE) constitute a propeptide that is removed on maturation.

This sequence belongs to the conotoxin I2 superfamily. As to expression, expressed by the venom duct.

It is found in the secreted. This Conus striatus (Striated cone) protein is conotoxin S11.3.